Here is a 287-residue protein sequence, read N- to C-terminus: Protease HtpX homolog (287 aa).

The next 2 helical transmembrane spans lie at 5-25 (IRTGLLMAALTALFVAIGYWI) and 28-48 (GAGAAIALAFAAAGNFVAYWV). Residue histidine 131 coordinates Zn(2+). Glutamate 132 is an active-site residue. Histidine 135 is a binding site for Zn(2+). 2 helical membrane-spanning segments follow: residues 146–166 (VTATLAGAIGMISNLAIFFGG) and 174–194 (PFAGIAGLLLLLLAPLTATLV). Glutamate 203 lines the Zn(2+) pocket.

It belongs to the peptidase M48B family. It depends on Zn(2+) as a cofactor.

It localises to the cell inner membrane. In Acidiphilium cryptum (strain JF-5), this protein is Protease HtpX homolog.